The chain runs to 622 residues: Basal cell adhesion molecule (622 aa).

The signal sequence occupies residues 1 to 25 (MEPPDARAGLLWLTFLLSGYSGAQA). Ig-like V-type domains follow at residues 26–135 (ELHV…SSVR) and 140–250 (PEDT…HTFR). The Extracellular portion of the chain corresponds to 26 to 541 (ELHVSVPPRV…GSVAPQTAQA (516 aa)). Cystine bridges form between cysteine 47/cysteine 118, cysteine 165/cysteine 230, and cysteine 284/cysteine 330. Ig-like C2-type domains lie at 267 to 342 (PSTT…EEVQ), 356 to 435 (PLEL…QSFQ), and 442 to 532 (PELK…FHFG). Residues asparagine 314, asparagine 323, asparagine 370, and asparagine 377 are each glycosylated (N-linked (GlcNAc...) asparagine). Disulfide bonds link cysteine 378–cysteine 418 and cysteine 467–cysteine 516. The chain crosses the membrane as a helical span at residues 542–562 (GVAVMAVAVSVGLLLLVVAAF). Residues 563-622 (YCMRRKGRPGCCRRAEKGAPPAREPELSHSGSERPEHTGLLMGGPSGGGRGGSGGFGDEC) lie on the Cytoplasmic side of the membrane. A disordered region spans residues 574–622 (CRRAEKGAPPAREPELSHSGSERPEHTGLLMGGPSGGGRGGSGGFGDEC). Residues 575–599 (RRAEKGAPPAREPELSHSGSERPEH) show a composition bias toward basic and acidic residues. 4 positions are modified to phosphoserine: serine 590, serine 592, serine 594, and serine 615. Residues 603-622 (LMGGPSGGGRGGSGGFGDEC) are compositionally biased toward gly residues.

In terms of assembly, homodimer. Interacts with ITGA4:ITGB1. Interacts with spectrins SPTA1 and SPTB1. Epinephrine-stimulated phosphorylation of Ser-615 by PKA enhances adhesion to laminin. Ser-615 can also be phosphorylated by AKT1.

The protein resides in the cell membrane. In terms of biological role, transmembrane glycoprotein that functions as both a receptor and an adhesion molecule playing a crucial role in cell adhesion, motility, migration and invasion. Extracellular domain enables binding to extracellular matrix proteins, such as laminin, integrin and other ligands while its intracellular domain interacts with cytoskeletal proteins like hemoglobin, facilitating cell signal transduction. Serves as a receptor for laminin alpha-5/LAMA5 to promote cell adhesion. Mechanistically, JAK2 induces BCAM phosphorylation and activates its adhesion to laminin by stimulating a Rap1/AKT signaling pathway in the absence of EPOR. This is Basal cell adhesion molecule (Bcam) from Mus musculus (Mouse).